The primary structure comprises 233 residues: Probable 2-phosphosulfolactate phosphatase (233 aa).

This sequence belongs to the ComB family. Requires Mg(2+) as cofactor.

The catalysed reaction is (2R)-O-phospho-3-sulfolactate + H2O = (2R)-3-sulfolactate + phosphate. The polypeptide is Probable 2-phosphosulfolactate phosphatase (Symbiobacterium thermophilum (strain DSM 24528 / JCM 14929 / IAM 14863 / T)).